The following is a 196-amino-acid chain: Cyclin-dependent kinase inhibitor 6 (196 aa).

Disordered stretches follow at residues 1 to 36 (MSER…PDSH) and 55 to 151 (ASDE…RKTP). The segment covering 124 to 139 (SEGLGETTTEMESSSA) has biased composition (low complexity). Residue Thr152 is modified to Phosphothreonine; by KIN10.

The protein belongs to the CDI family. ICK/KRP subfamily. Specifically interacts with CDKA-1, but not with CDKB1-1. Interacts with CYCD1-1, CYCD4-1 and RHF1A. Binds to FBL17. Interacts with KIN10. Interacts with CYCD3-1. Post-translationally, ubiquitinated by RHF1A and SCF(FBL17). Ubiquitination leads to its subsequent degradation, thus controlling cell cycle progression. In terms of processing, the phosphorylation at Thr-152 by KIN10 represses its activity. As to expression, expressed in newly formed organs such as the shoot apex. Expressed in cotyledon, primary root and marginal region of the leaves as well as in developing pollen.

Its subcellular location is the nucleus. The protein resides in the nucleoplasm. With respect to regulation, down-regulated by KIN10 under a phosphorylation-dependent manner. In terms of biological role, binds and inhibits CYCD2-1/CDKA-1 complex kinase activity. Regulates cell division which is crucial for plant growth, development and morphogenesis. May inhibit CDK kinases specifically involved in the G1/S phase transition. This is Cyclin-dependent kinase inhibitor 6 (KRP6) from Arabidopsis thaliana (Mouse-ear cress).